A 279-amino-acid chain; its full sequence is MNITLGYIDPVAFSLGPIQVRWYGIIIACGILLGYFIAQAALKQVGLHKDTLIDIIFYSAIVGFIVARIYFVTFQWPYYMNHLSEIPKIWHGGIAIHGGLIGGLISGIIVCKIKNLHPFQIGDIVAPSIILAQGIGRWGNFMNHEAHGGPVSRAFLEHLHLPDFIIRNMYIEGQYYHPTFLYESIWDVIGFVILITLRKRLKLGETFFGYLIWYSVGRFFVEAMRTDSLMLTSHIRVAQLVSVVLILISVIFVIYRRVKYQPIKYENSGPLTWPIKKAK.

A run of 3 helical transmembrane segments spans residues 22 to 42, 52 to 72, and 89 to 109; these read WYGI…QAAL, LIDI…IYFV, and IWHG…SGII. R137 contributes to the a 1,2-diacyl-sn-glycero-3-phospho-(1'-sn-glycerol) binding site. A run of 2 helical transmembrane segments spans residues 203-223 and 235-255; these read LGET…FVEA and IRVA…FVIY.

It belongs to the Lgt family.

It is found in the cell membrane. It catalyses the reaction L-cysteinyl-[prolipoprotein] + a 1,2-diacyl-sn-glycero-3-phospho-(1'-sn-glycerol) = an S-1,2-diacyl-sn-glyceryl-L-cysteinyl-[prolipoprotein] + sn-glycerol 1-phosphate + H(+). The protein operates within protein modification; lipoprotein biosynthesis (diacylglyceryl transfer). Functionally, catalyzes the transfer of the diacylglyceryl group from phosphatidylglycerol to the sulfhydryl group of the N-terminal cysteine of a prolipoprotein, the first step in the formation of mature lipoproteins. The sequence is that of Phosphatidylglycerol--prolipoprotein diacylglyceryl transferase from Staphylococcus epidermidis (strain ATCC 12228 / FDA PCI 1200).